A 453-amino-acid chain; its full sequence is Chromosomal replication initiator protein DnaA (453 aa).

The tract at residues 1–76 (MSGDAAALWP…LAWRQQLPAV (76 aa)) is domain I, interacts with DnaA modulators. The interval 76–115 (VRSVSVRGGVAATERAATLASVPLPTFDAPAAPAANPALL) is domain II. Residues 116 to 333 (GFDPRLSFDR…GALNKLLAYA (218 aa)) are domain III, AAA+ region. ATP contacts are provided by G160, G162, K163, and T164. A domain IV, binds dsDNA region spans residues 334 to 453 (ALTGARIDLM…IAAIRRSLNS (120 aa)).

It belongs to the DnaA family. In terms of assembly, oligomerizes as a right-handed, spiral filament on DNA at oriC.

The protein resides in the cytoplasm. In terms of biological role, plays an essential role in the initiation and regulation of chromosomal replication. ATP-DnaA binds to the origin of replication (oriC) to initiate formation of the DNA replication initiation complex once per cell cycle. Binds the DnaA box (a 9 base pair repeat at the origin) and separates the double-stranded (ds)DNA. Forms a right-handed helical filament on oriC DNA; dsDNA binds to the exterior of the filament while single-stranded (ss)DNA is stabiized in the filament's interior. The ATP-DnaA-oriC complex binds and stabilizes one strand of the AT-rich DNA unwinding element (DUE), permitting loading of DNA polymerase. After initiation quickly degrades to an ADP-DnaA complex that is not apt for DNA replication. Binds acidic phospholipids. In Sphingopyxis alaskensis (strain DSM 13593 / LMG 18877 / RB2256) (Sphingomonas alaskensis), this protein is Chromosomal replication initiator protein DnaA.